Here is a 445-residue protein sequence, read N- to C-terminus: Bifunctional protein GlmU (445 aa).

Positions 1–218 (MRALVLAAGK…LLEITGVNTR (218 aa)) are pyrophosphorylase. UDP-N-acetyl-alpha-D-glucosamine is bound by residues 6–9 (LAAG), lysine 20, glutamine 69, 74–75 (GT), 96–98 (YGD), glycine 134, glutamate 147, asparagine 162, and asparagine 216. Residue aspartate 98 participates in Mg(2+) binding. Asparagine 216 is a Mg(2+) binding site. The interval 219–239 (KTLVWLEEQLRMRKIEELLEN) is linker. Residues 240–445 (GVTILDPATT…GWVLKKRKEE (206 aa)) are N-acetyltransferase. 2 residues coordinate UDP-N-acetyl-alpha-D-glucosamine: arginine 321 and lysine 339. Histidine 351 acts as the Proton acceptor in catalysis. 2 residues coordinate UDP-N-acetyl-alpha-D-glucosamine: tyrosine 354 and asparagine 365. Residues alanine 368, 374-375 (NY), serine 393, alanine 411, and arginine 428 contribute to the acetyl-CoA site.

It in the N-terminal section; belongs to the N-acetylglucosamine-1-phosphate uridyltransferase family. This sequence in the C-terminal section; belongs to the transferase hexapeptide repeat family. In terms of assembly, homotrimer. Requires Mg(2+) as cofactor.

The protein localises to the cytoplasm. It catalyses the reaction alpha-D-glucosamine 1-phosphate + acetyl-CoA = N-acetyl-alpha-D-glucosamine 1-phosphate + CoA + H(+). The catalysed reaction is N-acetyl-alpha-D-glucosamine 1-phosphate + UTP + H(+) = UDP-N-acetyl-alpha-D-glucosamine + diphosphate. It functions in the pathway nucleotide-sugar biosynthesis; UDP-N-acetyl-alpha-D-glucosamine biosynthesis; N-acetyl-alpha-D-glucosamine 1-phosphate from alpha-D-glucosamine 6-phosphate (route II): step 2/2. The protein operates within nucleotide-sugar biosynthesis; UDP-N-acetyl-alpha-D-glucosamine biosynthesis; UDP-N-acetyl-alpha-D-glucosamine from N-acetyl-alpha-D-glucosamine 1-phosphate: step 1/1. It participates in bacterial outer membrane biogenesis; LPS lipid A biosynthesis. Its function is as follows. Catalyzes the last two sequential reactions in the de novo biosynthetic pathway for UDP-N-acetylglucosamine (UDP-GlcNAc). The C-terminal domain catalyzes the transfer of acetyl group from acetyl coenzyme A to glucosamine-1-phosphate (GlcN-1-P) to produce N-acetylglucosamine-1-phosphate (GlcNAc-1-P), which is converted into UDP-GlcNAc by the transfer of uridine 5-monophosphate (from uridine 5-triphosphate), a reaction catalyzed by the N-terminal domain. The polypeptide is Bifunctional protein GlmU (Thermotoga maritima (strain ATCC 43589 / DSM 3109 / JCM 10099 / NBRC 100826 / MSB8)).